We begin with the raw amino-acid sequence, 179 residues long: Large ribosomal subunit protein uL5 (179 aa).

The protein belongs to the universal ribosomal protein uL5 family. As to quaternary structure, part of the 50S ribosomal subunit; part of the 5S rRNA/L5/L18/L25 subcomplex. Contacts the 5S rRNA and the P site tRNA. Forms a bridge to the 30S subunit in the 70S ribosome.

This is one of the proteins that bind and probably mediate the attachment of the 5S RNA into the large ribosomal subunit, where it forms part of the central protuberance. In the 70S ribosome it contacts protein S13 of the 30S subunit (bridge B1b), connecting the 2 subunits; this bridge is implicated in subunit movement. Contacts the P site tRNA; the 5S rRNA and some of its associated proteins might help stabilize positioning of ribosome-bound tRNAs. This Geobacillus sp. (strain WCH70) protein is Large ribosomal subunit protein uL5.